A 277-amino-acid chain; its full sequence is Polyamine aminopropyltransferase (277 aa).

The 234-residue stretch at 2–235 (ELWFTENQDE…SLWTFTMGSK (234 aa)) folds into the PABS domain. Q31 contacts S-methyl-5'-thioadenosine. H62 and D86 together coordinate spermidine. Residues E106 and 137 to 138 (DG) each bind S-methyl-5'-thioadenosine. D155 acts as the Proton acceptor in catalysis. 155 to 158 (DSTD) contributes to the spermidine binding site. P162 provides a ligand contact to S-methyl-5'-thioadenosine.

This sequence belongs to the spermidine/spermine synthase family. As to quaternary structure, homodimer or homotetramer.

The protein resides in the cytoplasm. It carries out the reaction S-adenosyl 3-(methylsulfanyl)propylamine + putrescine = S-methyl-5'-thioadenosine + spermidine + H(+). The protein operates within amine and polyamine biosynthesis; spermidine biosynthesis; spermidine from putrescine: step 1/1. Functionally, catalyzes the irreversible transfer of a propylamine group from the amino donor S-adenosylmethioninamine (decarboxy-AdoMet) to putrescine (1,4-diaminobutane) to yield spermidine. The polypeptide is Polyamine aminopropyltransferase (Thermoanaerobacter pseudethanolicus (strain ATCC 33223 / 39E) (Clostridium thermohydrosulfuricum)).